The following is a 535-amino-acid chain: Ribonuclease Y 2 (535 aa).

The chain crosses the membrane as a helical span at residues 1–21 (MLITGLIIGCLLIGLVIGYVV). Residues 207–268 (LEHTVTVPNG…IRREVARVAL (62 aa)) form the KH domain. Residues 334–427 (VLLHSIEVAQ…VAAADAISGA (94 aa)) enclose the HD domain.

Belongs to the RNase Y family.

It localises to the cell membrane. Its function is as follows. Endoribonuclease that initiates mRNA decay. The chain is Ribonuclease Y 2 from Levilactobacillus brevis (strain ATCC 367 / BCRC 12310 / CIP 105137 / JCM 1170 / LMG 11437 / NCIMB 947 / NCTC 947) (Lactobacillus brevis).